A 1120-amino-acid polypeptide reads, in one-letter code: Transcription-repair-coupling factor (1120 aa).

The region spanning 591 to 756 (DLTNGMLMDR…LTGLKELSII (166 aa)) is the Helicase ATP-binding domain. Residue 604 to 611 (GDVGFGKT) coordinates ATP. Residues 709-712 (DEEQ) carry the DEEQ box motif. Residues 777-933 (IIRDALLREH…TIASHDADLR (157 aa)) form the Helicase C-terminal domain.

In the N-terminal section; belongs to the UvrB family. The protein in the C-terminal section; belongs to the helicase family. RecG subfamily.

Its subcellular location is the cytoplasm. Couples transcription and DNA repair by recognizing RNA polymerase (RNAP) stalled at DNA lesions. Mediates ATP-dependent release of RNAP and its truncated transcript from the DNA, and recruitment of nucleotide excision repair machinery to the damaged site. This Rickettsia typhi (strain ATCC VR-144 / Wilmington) protein is Transcription-repair-coupling factor.